Here is a 314-residue protein sequence, read N- to C-terminus: Methenyltetrahydromethanopterin cyclohydrolase (314 aa).

The protein belongs to the MCH family.

The protein resides in the cytoplasm. It carries out the reaction 5,10-methenyl-5,6,7,8-tetrahydromethanopterin + H2O = N(5)-formyl-5,6,7,8-tetrahydromethanopterin + H(+). It participates in one-carbon metabolism; methanogenesis from CO(2); 5,10-methenyl-5,6,7,8-tetrahydromethanopterin from CO(2): step 3/3. Catalyzes the reversible interconversion of 5-formyl-H(4)MPT to methenyl-H(4)MPT(+). The chain is Methenyltetrahydromethanopterin cyclohydrolase from Methanocorpusculum labreanum (strain ATCC 43576 / DSM 4855 / Z).